The primary structure comprises 677 residues: Probable sulfate transporter 4.2 (677 aa).

The Cytoplasmic portion of the chain corresponds to 1-83 (MSLAVKDLST…RTYRWHQYFK (83 aa)). A helical transmembrane segment spans residues 84–104 (LDLMAGITVGIMLVPQAMSYA). The Extracellular portion of the chain corresponds to 105 to 108 (RLAG). A helical membrane pass occupies residues 109 to 129 (LQPIYGLYSSFVPVFVYAVFG). Residues 130–133 (SSRQ) are Cytoplasmic-facing. Residues 134-154 (LAVGPVALVSLLVSNALSGIV) traverse the membrane as a helical segment. Residues 155–161 (DPSEELY) are Extracellular-facing. Residues 162–182 (TELAILLALMVGIFESIMGFL) form a helical membrane-spanning segment. The Cytoplasmic portion of the chain corresponds to 183-189 (RLGWLIR). Residues 190–210 (FISHSVISGFTTASAVVIGLS) traverse the membrane as a helical segment. Topologically, residues 211-241 (QLKYFLGYSVSRSSKIMPVIDSIIAGADQFK) are extracellular. Residues 242–262 (WPPFLLGCTILVILLVMKHVG) form a helical membrane-spanning segment. Residues 263–269 (KAKKELR) lie on the Cytoplasmic side of the membrane. A helical transmembrane segment spans residues 270 to 290 (FIRAAGPLTGLALGTIIAKVF). The Extracellular portion of the chain corresponds to 291–318 (HPPSITLVGDIPQGLPKFSFPKSFDHAK). The helical transmembrane segment at 319–339 (LLLPTSALITGVAILESVGIA) threads the bilayer. Topologically, residues 340-355 (KALAAKNRYELDSNSE) are cytoplasmic. A helical membrane pass occupies residues 356–376 (LFGLGVANIFGSLFSAYPTTG). Topologically, residues 377–392 (SFSRSAVNSESEAKTG) are extracellular. A helical membrane pass occupies residues 393–413 (LSGLVTGIIIGCSLLFLTPMF). At 414–420 (KFIPQCA) the chain is on the cytoplasmic side. Residues 421–441 (LAAIVISAVSGLVDYEGAIFL) form a helical membrane-spanning segment. Residues 442–459 (WRVDKRDFTLWTITSTTT) lie on the Extracellular side of the membrane. Residues 460–480 (LFFGIEIGVLIGVGFSLAFVI) traverse the membrane as a helical segment. Topologically, residues 481 to 677 (HESANPHIAV…LEEPLLSREK (197 aa)) are cytoplasmic. Positions 505–629 (QYPEAYTYNG…VRVHDAVQVC (125 aa)) constitute an STAS domain.

This sequence belongs to the SLC26A/SulP transporter (TC 2.A.53) family.

It is found in the membrane. Functionally, h(+)/sulfate cotransporter that may play a role in the regulation of sulfate assimilation. The sequence is that of Probable sulfate transporter 4.2 (SULTR4;2) from Arabidopsis thaliana (Mouse-ear cress).